Reading from the N-terminus, the 157-residue chain is MSRRRGKVEPRKITPDPVYNDVQVAKFINCLMLSGKKSVAEQLFYDALEIIQKKTGNDPYTTFREALENAKPQVEVKSRRVGGVTYQVPVEVRPERRLALGIRWLIRYSRDRNEKGMAAKLAAEFIEAQKGTGSAIKKKEDIRKMAEANKAFSHYRW.

Belongs to the universal ribosomal protein uS7 family. Part of the 30S ribosomal subunit. Contacts proteins S9 and S11.

In terms of biological role, one of the primary rRNA binding proteins, it binds directly to 16S rRNA where it nucleates assembly of the head domain of the 30S subunit. Is located at the subunit interface close to the decoding center, probably blocks exit of the E-site tRNA. This Leptospira interrogans serogroup Icterohaemorrhagiae serovar copenhageni (strain Fiocruz L1-130) protein is Small ribosomal subunit protein uS7.